Reading from the N-terminus, the 256-residue chain is Small ribosomal subunit protein uS2 (256 aa).

It belongs to the universal ribosomal protein uS2 family.

The polypeptide is Small ribosomal subunit protein uS2 (Rhizobium rhizogenes (strain K84 / ATCC BAA-868) (Agrobacterium radiobacter)).